The chain runs to 544 residues: Chaperonin GroEL 3 (544 aa).

Residues 30-33, Lys51, 87-91, Gly415, and Asp496 each bind ATP; these read TLGP and DGTTT.

Belongs to the chaperonin (HSP60) family. Forms a cylinder of 14 subunits composed of two heptameric rings stacked back-to-back. Interacts with the co-chaperonin GroES.

Its subcellular location is the cytoplasm. The enzyme catalyses ATP + H2O + a folded polypeptide = ADP + phosphate + an unfolded polypeptide.. Together with its co-chaperonin GroES, plays an essential role in assisting protein folding. The GroEL-GroES system forms a nano-cage that allows encapsulation of the non-native substrate proteins and provides a physical environment optimized to promote and accelerate protein folding. The polypeptide is Chaperonin GroEL 3 (Rhizobium meliloti (strain 1021) (Ensifer meliloti)).